The following is a 290-amino-acid chain: Phosphonopyruvate hydrolase (290 aa).

40-44 (WGSGF) provides a ligand contact to substrate. Aspartate 54 (nucleophile) is an active-site residue. Aspartate 81 contacts Mg(2+). Positions 155, 186, and 188 each coordinate substrate.

Homodimer. Homotetramer. Co(2+) is required as a cofactor. The cofactor is Mg(2+). It depends on Mn(2+) as a cofactor.

It carries out the reaction 3-phosphonopyruvate + H2O = pyruvate + phosphate + H(+). Its activity is regulated as follows. Partially inhibited by EDTA. Activity is restored by Co(2+), and to a lesser extent by Ni(2+) and Mg(2+). Unaffected by Cs(2+) and Ca(2+). Activity is reduced by Mn(2+) and Cu(2+). In terms of biological role, hydrolyzes phosphonopyruvate. Not active towards phosphoenolpyruvate, glycerophosphate, phospho-L-serine or phosphoglycolic acid. This is Phosphonopyruvate hydrolase from Variovorax sp. (strain Pal2).